Reading from the N-terminus, the 324-residue chain is tRNA-modifying protein YgfZ (324 aa).

Trp-186 serves as a coordination point for folate.

This sequence belongs to the tRNA-modifying YgfZ family.

Its subcellular location is the cytoplasm. Its function is as follows. Folate-binding protein involved in regulating the level of ATP-DnaA and in the modification of some tRNAs. It is probably a key factor in regulatory networks that act via tRNA modification, such as initiation of chromosomal replication. The polypeptide is tRNA-modifying protein YgfZ (Colwellia psychrerythraea (strain 34H / ATCC BAA-681) (Vibrio psychroerythus)).